The chain runs to 972 residues: 116 kDa U5 small nuclear ribonucleoprotein component (972 aa).

The residue at position 1 (M1) is an N-acetylmethionine. The segment at 1-54 (MDTDLYDEFGNYIGPELDSDEDDDELGRETKDLDEMDDDDDDDDIGDHDDDHPG) is disordered. 2 stretches are compositionally biased toward acidic residues: residues 17 to 26 (LDSDEDDDEL) and 34 to 48 (DEMD…IGDH). S19 bears the Phosphoserine mark. Residue K64 forms a Glycyl lysine isopeptide (Lys-Gly) (interchain with G-Cter in SUMO1); alternate linkage. K64 is covalently cross-linked (Glycyl lysine isopeptide (Lys-Gly) (interchain with G-Cter in SUMO2); alternate). At T86 the chain carries Phosphothreonine. The tr-type G domain occupies 127-409 (ELIRNVTLCG…GIHLTKEELK (283 aa)). GTP contacts are provided by residues 136–143 (GHLHHGKT), 204–208 (DTPGH), and 258–261 (NKID).

Belongs to the TRAFAC class translation factor GTPase superfamily. Classic translation factor GTPase family. EF-G/EF-2 subfamily. Component of the U5 snRNP and the U4/U6-U5 tri-snRNP complex, a building block of the spliceosome. The U4/U6-U5 tri-snRNP complex is composed of the U4, U6 and U5 snRNAs and at least PRPF3, PRPF4, PRPF6, PRPF8, PRPF31, SNRNP200, TXNL4A, SNRNP40, DDX23, CD2BP2, PPIH, SNU13, EFTUD2, SART1 and USP39. Component of the pre-catalytic, catalytic and post-catalytic spliceosome complexes. Component of the minor spliceosome, which splices U12-type introns. Within this complex, interacts with CRIPT. Interacts with ERBB4 and PRPF8. Interacts with PIH1D1. Interacts with RPAP3 and URI1 in a ZNHIT2-dependent manner. Interacts with NRDE2. Interacts with FAM50A. Interacts with UBL5.

The protein localises to the nucleus. Functionally, required for pre-mRNA splicing as component of the spliceosome, including pre-catalytic, catalytic and post-catalytic spliceosomal complexes. Component of the U5 snRNP and the U4/U6-U5 tri-snRNP complex, a building block of the spliceosome. As a component of the minor spliceosome, involved in the splicing of U12-type introns in pre-mRNAs. This Pongo abelii (Sumatran orangutan) protein is 116 kDa U5 small nuclear ribonucleoprotein component (EFTUD2).